The sequence spans 91 residues: Putative defensin-like protein 221 (91 aa).

Residues 1–19 (MKTLFFFLTIAVLVSSCTS) form the signal peptide. Intrachain disulfides connect Cys61-Cys78, Cys64-Cys83, and Cys68-Cys85.

It belongs to the DEFL family.

It is found in the secreted. The polypeptide is Putative defensin-like protein 221 (Arabidopsis thaliana (Mouse-ear cress)).